The following is a 243-amino-acid chain: MARKGPKRHLKRLAAPTSWYIHRKAYKWAVRPSPGPHSMKTSIPLIYIVRDYLGYAKTAREARKILNEGKILVDGRVRKDYKFPVGIMDVVSIPETGEHYRVLPNRIGKLILHPISEEEAKLKPFRINNKRMVKGAKVQLNLHDGSNHLVSLAEKDAYKTSYTVIMQVPERQIVKVLPFEVGAYVFVTQGKNVARKGKIVEVRQFPMGWPDVVTIEDENGELFDTLKEYAFVIGKDKPEISLP.

Positions 43–105 (IPLIYIVRDY…TGEHYRVLPN (63 aa)) constitute an S4 RNA-binding domain.

This sequence belongs to the eukaryotic ribosomal protein eS4 family. In terms of assembly, part of the 30S ribosomal subunit.

This chain is Small ribosomal subunit protein eS4, found in Thermococcus kodakarensis (strain ATCC BAA-918 / JCM 12380 / KOD1) (Pyrococcus kodakaraensis (strain KOD1)).